Consider the following 187-residue polypeptide: Dirigent protein 6 (187 aa).

The N-terminal stretch at 1-29 (MAFLVEKQLFKALFSFFLLVLLFSDTVLS) is a signal peptide. The cysteines at positions 40 and 186 are disulfide-linked. N-linked (GlcNAc...) asparagine glycosylation is found at asparagine 59 and asparagine 123.

The protein belongs to the plant dirigent protein family. In terms of assembly, homodimer. As to expression, expressed in roots, cotyledon veins, leaf trichomes, flowers, siliques, and meristems. Present in interfascicular/vascular cambia and developing xylem.

It localises to the secreted. Its subcellular location is the extracellular space. It is found in the apoplast. Functionally, dirigent proteins impart stereoselectivity on the phenoxy radical-coupling reaction, yielding optically active lignans from two molecules of coniferyl alcohol in the biosynthesis of lignans, flavonolignans, and alkaloids and thus plays a central role in plant secondary metabolism. Enantiocomplementary dirigent protein that mediates the laccase-catalyzed enantioselective oxidative phenol coupling of (E)-coniferyl alcohol to (-)-pinoresinol. The sequence is that of Dirigent protein 6 (DIR6) from Arabidopsis thaliana (Mouse-ear cress).